Reading from the N-terminus, the 282-residue chain is 4-diphosphocytidyl-2-C-methyl-D-erythritol kinase (282 aa).

Residue lysine 11 is part of the active site. 93–103 (LVSAGLAGGSA) serves as a coordination point for ATP. Aspartate 133 is an active-site residue.

Belongs to the GHMP kinase family. IspE subfamily.

The enzyme catalyses 4-CDP-2-C-methyl-D-erythritol + ATP = 4-CDP-2-C-methyl-D-erythritol 2-phosphate + ADP + H(+). The protein operates within isoprenoid biosynthesis; isopentenyl diphosphate biosynthesis via DXP pathway; isopentenyl diphosphate from 1-deoxy-D-xylulose 5-phosphate: step 3/6. Catalyzes the phosphorylation of the position 2 hydroxy group of 4-diphosphocytidyl-2C-methyl-D-erythritol. This Ehrlichia chaffeensis (strain ATCC CRL-10679 / Arkansas) protein is 4-diphosphocytidyl-2-C-methyl-D-erythritol kinase.